A 193-amino-acid polypeptide reads, in one-letter code: Auxin-responsive protein IAA23 (193 aa).

Positions 1 to 12 (MSTSSGADSSPP) are enriched in polar residues. Residues 1–66 (MSTSSGADSS…SPKARAVGWP (66 aa)) form a disordered region. A compositionally biased stretch (low complexity) spans 21–36 (TALTLALPGSSSSSSS). The short motif at 23–27 (LTLAL) is the EAR-like (transcriptional repression) element. The segment covering 39–53 (DPERKRAAHADHADA) has biased composition (basic and acidic residues). Residues 83–191 (AKLVKVAVDG…EAVNLSPRRS (109 aa)) enclose the PB1 domain.

It belongs to the Aux/IAA family. In terms of assembly, homodimers and heterodimers. In terms of tissue distribution, highly expressed in roots. Expressed in seedlings.

Its subcellular location is the nucleus. Functionally, aux/IAA proteins are short-lived transcriptional factors that function as repressors of early auxin response genes at low auxin concentrations. This Oryza sativa subsp. japonica (Rice) protein is Auxin-responsive protein IAA23 (IAA23).